Here is a 443-residue protein sequence, read N- to C-terminus: MDPLNLSWYDDDLERQNWSRPFNGSDGKADRPHYNYYATLLTLLIAVIVFGNVLVCMAVSREKALQTTTNYLIVSLAVADLLVATLVMPWVVYLEVVGEWKFSRIHCDIFVTLDVMMCTASILNLCAISIDRYTAVAMPMLYNTRYSSKRRVTVMISIVWVLSFTISCPLLFGLNNADQNECIIANPAFVVYSSIVSFYVPFIVTLLVYIKIYIVLRRRRKRVNTKRSSRAFRAHLRAPLKGNCTHPEDMKLCTVIMKSNGSFPVNRRRVEAARRAQELEMEMLSSTSPPERTRYSPIPPSHHQLTLPDPSHHGLHSTPDSPAKPEKNGHAKDHPKIAKIFEIQTMPNGKTRTSLKTMSRRKLSQQKEKKATQMLAIVLGVFIICWLPFFITHILNIHCDCNIPPVLYSAFTWLGYVNSAVNPIIYTTFNIEFRKAFLKILHC.

The Extracellular portion of the chain corresponds to 1–37 (MDPLNLSWYDDDLERQNWSRPFNGSDGKADRPHYNYY). N-linked (GlcNAc...) asparagine glycosylation is found at asparagine 5, asparagine 17, and asparagine 23. A helical membrane pass occupies residues 38 to 60 (ATLLTLLIAVIVFGNVLVCMAVS). The Cytoplasmic segment spans residues 61-70 (REKALQTTTN). The helical transmembrane segment at 71–93 (YLIVSLAVADLLVATLVMPWVVY) threads the bilayer. The Extracellular portion of the chain corresponds to 94-108 (LEVVGEWKFSRIHCD). Cysteines 107 and 182 form a disulfide. A helical membrane pass occupies residues 109-130 (IFVTLDVMMCTASILNLCAISI). Residues 131–151 (DRYTAVAMPMLYNTRYSSKRR) are Cytoplasmic-facing. A helical transmembrane segment spans residues 152–172 (VTVMISIVWVLSFTISCPLLF). Topologically, residues 173 to 188 (GLNNADQNECIIANPA) are extracellular. The helical transmembrane segment at 189-213 (FVVYSSIVSFYVPFIVTLLVYIKIY) threads the bilayer. Residues 211 to 373 (KIYIVLRRRR…SQQKEKKATQ (163 aa)) form an interaction with PPP1R9B region. Residues 214 to 373 (IVLRRRRKRV…SQQKEKKATQ (160 aa)) lie on the Cytoplasmic side of the membrane. The tract at residues 281 to 332 (MEMLSSTSPPERTRYSPIPPSHHQLTLPDPSHHGLHSTPDSPAKPEKNGHAK) is disordered. Over residues 323-332 (AKPEKNGHAK) the composition is skewed to basic and acidic residues. Residues 374-395 (MLAIVLGVFIICWLPFFITHIL) form a helical membrane-spanning segment. Over 396–409 (NIHCDCNIPPVLYS) the chain is Extracellular. Residues cysteine 399 and cysteine 401 are joined by a disulfide bond. Residues 410–431 (AFTWLGYVNSAVNPIIYTTFNI) traverse the membrane as a helical segment. At 432 to 443 (EFRKAFLKILHC) the chain is on the cytoplasmic side. Cysteine 443 is lipidated: S-palmitoyl cysteine.

The protein belongs to the G-protein coupled receptor 1 family. Forms homo- and heterooligomers with DRD4. The interaction with DRD4 may modulate agonist-induced downstream signaling. Interacts with CADPS and CADPS2. Interacts with GPRASP1, PPP1R9B and CLIC6. Interacts with ARRB2. Interacts with HTR2A. Interacts with GNAI2 isoform sGi2, the interaction allows the creation of an intracellular pool of DRD2 that can be released to cell surface upon agonist stimulation. Interacts with DRD1. Interacts with KCNA2. Palmitoylated. Palmitoylation which is required for proper localization to the plasma membrane and stability of the receptor could be carried on by ZDHHC4, ZDHHC3 and ZDHHC8. In terms of tissue distribution, expressed in the anterior pituitary gland.

Its subcellular location is the cell membrane. The protein resides in the golgi apparatus membrane. Dopamine receptor whose activity is mediated by G proteins which inhibit adenylyl cyclase. Positively regulates postnatal regression of retinal hyaloid vessels via suppression of VEGFR2/KDR activity, downstream of OPN5. This chain is D(2) dopamine receptor (DRD2), found in Homo sapiens (Human).